The chain runs to 837 residues: Tuftelin-interacting protein 11 (837 aa).

Basic and acidic residues-rich tracts occupy residues 1–13 (MSLSHLYRDGEGH) and 44–64 (QTKEEATYGVWAERDSDEERP). 3 disordered regions span residues 1-21 (MSLSHLYRDGEGHLDDDDDER), 34-73 (EFNPNRQRHWQTKEEATYGVWAERDSDEERPSFGGKRARD), and 85-135 (LKKG…FAGG). The interval 1–50 (MSLSHLYRDGEGHLDDDDDERENFEITDWDLQNEFNPNRQRHWQTKEEAT) is required for interaction with DHX15. Phosphoserine occurs at positions 2, 59, 95, and 98. A compositionally biased stretch (acidic residues) spans 91-100 (EEADSEDSDA). Basic and acidic residues predominate over residues 101-116 (EEKPVKQEDFPKDLGP). Residue serine 144 is modified to Phosphoserine. The 47-residue stretch at 149-195 (TKGIGQKLLQKMGYVPGRGLGKNAQGIINPIEAKQRKGKGAVGAYGS) folds into the G-patch domain. The disordered stretch occupies residues 183–236 (QRKGKGAVGAYGSERTTQSLQDFPVADSEEEAEEEFQKELSQWRKDPSGSKKKP). At serine 210 the chain carries Phosphoserine. The span at 217-231 (EFQKELSQWRKDPSG) shows a compositional bias: basic and acidic residues. The Nuclear localization signal motif lies at 700-705 (VKDKFN). The required for nuclear speckle localization stretch occupies residues 710–734 (IMNRAVSSNVGAYMQPGARENIAYL).

This sequence belongs to the TFP11/STIP family. As to quaternary structure, identified in the spliceosome C complex. Found in the Intron Large (IL) complex, a post-mRNA release spliceosomal complex containing the excised intron, U2, U5 and U6 snRNPs, and splicing factors. Interacts with TUFT1. Interacts with DHX15; indicative for a recruitment of DHX15 to the IL complex. Interacts with GCFC2.

It localises to the cytoplasm. Its subcellular location is the nucleus. Its function is as follows. Involved in pre-mRNA splicing, specifically in spliceosome disassembly during late-stage splicing events. Intron turnover seems to proceed through reactions in two lariat-intron associated complexes termed Intron Large (IL) and Intron Small (IS). In cooperation with DHX15 seems to mediate the transition of the U2, U5 and U6 snRNP-containing IL complex to the snRNP-free IS complex leading to efficient debranching and turnover of excised introns. May play a role in the differentiation of ameloblasts and odontoblasts or in the forming of the enamel extracellular matrix. In Rattus norvegicus (Rat), this protein is Tuftelin-interacting protein 11 (Tfip11).